Here is a 381-residue protein sequence, read N- to C-terminus: Putative glycosyltransferase EpsD (381 aa).

This sequence belongs to the glycosyltransferase group 1 family. Glycosyltransferase 4 subfamily.

Functionally, may be involved in the production of the exopolysaccharide (EPS) component of the extracellular matrix during biofilm formation. EPS is responsible for the adhesion of chains of cells into bundles. Required for biofilm maintenance. This chain is Putative glycosyltransferase EpsD (epsD), found in Bacillus subtilis (strain 168).